The primary structure comprises 395 residues: uncharacterized protein (395 aa).

The next 8 helical transmembrane spans lie at 15 to 35 (ILAF…VTVF), 56 to 76 (WPWI…NIII), 86 to 106 (FHAP…FQIV), 131 to 151 (AVLL…LITW), 175 to 195 (WFSF…IFIA), 254 to 274 (LANI…FAIV), 298 to 318 (IAIT…TQFV), and 348 to 368 (VYIP…QVVI).

It is found in the cell membrane. This is an uncharacterized protein from Mycoplasma pneumoniae (strain ATCC 29342 / M129 / Subtype 1) (Mycoplasmoides pneumoniae).